The following is a 330-amino-acid chain: Tryptophan--tRNA ligase (330 aa).

ATP-binding positions include 9–11 (QPT) and 17–18 (GN). The short motif at 10–18 (PTGDPHIGN) is the 'HIGH' region element. Aspartate 136 lines the L-tryptophan pocket. ATP-binding positions include 148–150 (GED), isoleucine 187, and 195–199 (KMSKS). The short motif at 195–199 (KMSKS) is the 'KMSKS' region element.

This sequence belongs to the class-I aminoacyl-tRNA synthetase family. In terms of assembly, homodimer.

It localises to the cytoplasm. It carries out the reaction tRNA(Trp) + L-tryptophan + ATP = L-tryptophyl-tRNA(Trp) + AMP + diphosphate + H(+). Functionally, catalyzes the attachment of tryptophan to tRNA(Trp). The sequence is that of Tryptophan--tRNA ligase from Deinococcus radiodurans (strain ATCC 13939 / DSM 20539 / JCM 16871 / CCUG 27074 / LMG 4051 / NBRC 15346 / NCIMB 9279 / VKM B-1422 / R1).